We begin with the raw amino-acid sequence, 509 residues long: Activin receptor type-1 (509 aa).

The signal sequence occupies residues 1 to 20 (MVDGVMILPVLIMIALPSPS). At 21 to 123 (MEDEKPKVNP…FPGTQNFHLE (103 aa)) the chain is on the extracellular side. An N-linked (GlcNAc...) asparagine glycan is attached at Asn-102. Residues 124 to 146 (VGLIILSVVFAVCLLACLLGVAL) form a helical membrane-spanning segment. Residues 147 to 509 (RKFKRRNQER…NSLDKLKTDC (363 aa)) lie on the Cytoplasmic side of the membrane. In terms of domain architecture, GS spans 178-207 (STLADLLDHSCTSGSGSGLPFLVQRTVARQ). The Protein kinase domain maps to 208–502 (ITLLECVGKG…KTLTKIDNSL (295 aa)). ATP is bound by residues 214–222 (VGKGRYGEV) and Lys-235. Asp-336 (proton acceptor) is an active-site residue. Residue Ser-501 is modified to Phosphoserine.

The protein belongs to the protein kinase superfamily. TKL Ser/Thr protein kinase family. TGFB receptor subfamily. As to quaternary structure, interacts with FKBP1A. Interacts with FCHO1. Interacts with CLU. Interacts with type II receptors AMHR2 and ACVR2A. Interacts with BMP7. Interacts with GDF2/BMP9. Interacts with BMP6 (when glycosylated); the interaction may induce HAMP expression. Interacts with TSC22D1/TSC-22. Mg(2+) is required as a cofactor. Requires Mn(2+) as cofactor. In terms of tissue distribution, expressed in normal parenchymal cells, endothelial cells, fibroblasts and tumor-derived epithelial cells.

It localises to the membrane. It catalyses the reaction L-threonyl-[receptor-protein] + ATP = O-phospho-L-threonyl-[receptor-protein] + ADP + H(+). The catalysed reaction is L-seryl-[receptor-protein] + ATP = O-phospho-L-seryl-[receptor-protein] + ADP + H(+). Functionally, bone morphogenetic protein (BMP) type I receptor that is involved in a wide variety of biological processes, including bone, heart, cartilage, nervous, and reproductive system development and regulation. As a type I receptor, forms heterotetrameric receptor complexes with the type II receptors AMHR2, ACVR2A or ACVR2B. Upon binding of ligands such as BMP7 or GDF2/BMP9 to the heteromeric complexes, type II receptors transphosphorylate ACVR1 intracellular domain. In turn, ACVR1 kinase domain is activated and subsequently phosphorylates SMAD1/5/8 proteins that transduce the signal. In addition to its role in mediating BMP pathway-specific signaling, suppresses TGFbeta/activin pathway signaling by interfering with the binding of activin to its type II receptor. Besides canonical SMAD signaling, can activate non-canonical pathways such as p38 mitogen-activated protein kinases/MAPKs. May promote the expression of HAMP, potentially via its interaction with BMP6. The protein is Activin receptor type-1 (ACVR1) of Homo sapiens (Human).